Reading from the N-terminus, the 366-residue chain is UDP-N-acetylglucosamine--N-acetylmuramyl-(pentapeptide) pyrophosphoryl-undecaprenol N-acetylglucosamine transferase (366 aa).

Residues 15-17, Asn127, Arg175, Ser201, Ile255, and Gln300 each bind UDP-N-acetyl-alpha-D-glucosamine; that span reads TGG.

The protein belongs to the glycosyltransferase 28 family. MurG subfamily.

Its subcellular location is the cell inner membrane. The catalysed reaction is di-trans,octa-cis-undecaprenyl diphospho-N-acetyl-alpha-D-muramoyl-L-alanyl-D-glutamyl-meso-2,6-diaminopimeloyl-D-alanyl-D-alanine + UDP-N-acetyl-alpha-D-glucosamine = di-trans,octa-cis-undecaprenyl diphospho-[N-acetyl-alpha-D-glucosaminyl-(1-&gt;4)]-N-acetyl-alpha-D-muramoyl-L-alanyl-D-glutamyl-meso-2,6-diaminopimeloyl-D-alanyl-D-alanine + UDP + H(+). Its pathway is cell wall biogenesis; peptidoglycan biosynthesis. In terms of biological role, cell wall formation. Catalyzes the transfer of a GlcNAc subunit on undecaprenyl-pyrophosphoryl-MurNAc-pentapeptide (lipid intermediate I) to form undecaprenyl-pyrophosphoryl-MurNAc-(pentapeptide)GlcNAc (lipid intermediate II). This Thiobacillus denitrificans (strain ATCC 25259 / T1) protein is UDP-N-acetylglucosamine--N-acetylmuramyl-(pentapeptide) pyrophosphoryl-undecaprenol N-acetylglucosamine transferase.